Here is a 488-residue protein sequence, read N- to C-terminus: Glutamyl-tRNA(Gln) amidotransferase subunit A (488 aa).

Residues lysine 77 and serine 152 each act as charge relay system in the active site. Residue serine 176 is the Acyl-ester intermediate of the active site.

The protein belongs to the amidase family. GatA subfamily. In terms of assembly, heterotrimer of A, B and C subunits.

It catalyses the reaction L-glutamyl-tRNA(Gln) + L-glutamine + ATP + H2O = L-glutaminyl-tRNA(Gln) + L-glutamate + ADP + phosphate + H(+). In terms of biological role, allows the formation of correctly charged Gln-tRNA(Gln) through the transamidation of misacylated Glu-tRNA(Gln) in organisms which lack glutaminyl-tRNA synthetase. The reaction takes place in the presence of glutamine and ATP through an activated gamma-phospho-Glu-tRNA(Gln). The polypeptide is Glutamyl-tRNA(Gln) amidotransferase subunit A (Streptococcus equi subsp. zooepidemicus (strain MGCS10565)).